A 369-amino-acid chain; its full sequence is Peptide chain release factor 2 (369 aa).

Gln-250 is modified (N5-methylglutamine).

It belongs to the prokaryotic/mitochondrial release factor family. Post-translationally, methylated by PrmC. Methylation increases the termination efficiency of RF2.

The protein localises to the cytoplasm. In terms of biological role, peptide chain release factor 2 directs the termination of translation in response to the peptide chain termination codons UGA and UAA. The polypeptide is Peptide chain release factor 2 (prfB) (Rickettsia typhi (strain ATCC VR-144 / Wilmington)).